The primary structure comprises 475 residues: Ribulose bisphosphate carboxylase large chain (475 aa).

A propeptide spanning residues 1-2 (MS) is cleaved from the precursor. Residue proline 3 is modified to N-acetylproline. Lysine 14 bears the N6,N6,N6-trimethyllysine mark. 2 residues coordinate substrate: asparagine 123 and threonine 173. Lysine 175 acts as the Proton acceptor in catalysis. A substrate-binding site is contributed by lysine 177. The Mg(2+) site is built by lysine 201, aspartate 203, and glutamate 204. N6-carboxylysine is present on lysine 201. The Proton acceptor role is filled by histidine 294. Substrate-binding residues include arginine 295, histidine 327, and serine 379.

The protein belongs to the RuBisCO large chain family. Type I subfamily. Heterohexadecamer of 8 large chains and 8 small chains; disulfide-linked. The disulfide link is formed within the large subunit homodimers. It depends on Mg(2+) as a cofactor. In terms of processing, the disulfide bond which can form in the large chain dimeric partners within the hexadecamer appears to be associated with oxidative stress and protein turnover.

The protein localises to the plastid. It is found in the chloroplast. It carries out the reaction 2 (2R)-3-phosphoglycerate + 2 H(+) = D-ribulose 1,5-bisphosphate + CO2 + H2O. The enzyme catalyses D-ribulose 1,5-bisphosphate + O2 = 2-phosphoglycolate + (2R)-3-phosphoglycerate + 2 H(+). Its function is as follows. RuBisCO catalyzes two reactions: the carboxylation of D-ribulose 1,5-bisphosphate, the primary event in carbon dioxide fixation, as well as the oxidative fragmentation of the pentose substrate in the photorespiration process. Both reactions occur simultaneously and in competition at the same active site. The polypeptide is Ribulose bisphosphate carboxylase large chain (Cedrus deodara (Deodar cedar)).